The following is a 398-amino-acid chain: RNA exonuclease 3 (398 aa).

One can recognise an Exonuclease domain in the interval 239-385; sequence VLALDCEMGF…QDAIAAMDII (147 aa).

This sequence belongs to the REXO1/REXO3 family.

The protein localises to the cytoplasm. It is found in the nucleus. 3' to 5' exoribonuclease required for proper 3' end maturation of MRP RNA and of the U5L snRNA. This chain is RNA exonuclease 3 (REX3), found in Candida glabrata (strain ATCC 2001 / BCRC 20586 / JCM 3761 / NBRC 0622 / NRRL Y-65 / CBS 138) (Yeast).